Consider the following 199-residue polypeptide: N-(5'-phosphoribosyl)anthranilate isomerase (199 aa).

It belongs to the TrpF family.

It carries out the reaction N-(5-phospho-beta-D-ribosyl)anthranilate = 1-(2-carboxyphenylamino)-1-deoxy-D-ribulose 5-phosphate. It functions in the pathway amino-acid biosynthesis; L-tryptophan biosynthesis; L-tryptophan from chorismate: step 3/5. The sequence is that of N-(5'-phosphoribosyl)anthranilate isomerase from Streptococcus pneumoniae (strain Taiwan19F-14).